Consider the following 370-residue polypeptide: Homospermidine synthase 1 (370 aa).

It belongs to the deoxyhypusine synthase family. As to quaternary structure, homotetramer. Requires NAD(+) as cofactor. In terms of processing, the N-terminus is blocked. As to expression, expressed in roots.

The enzyme catalyses putrescine + spermidine = sym-homospermidine + propane-1,3-diamine. The protein operates within alkaloid biosynthesis; pyrrolizidine alkaloid biosynthesis. Catalyzes the transfer of an aminobutyl unit from spermidine onto putrescine. The resulting polyamine homospermidine is a precursor in the biosynthesis of pyrrolizidine alkaloids. This is Homospermidine synthase 1 (HSS1) from Senecio vernalis (Spring groundsel).